The following is a 418-amino-acid chain: UDP-N-acetylglucosamine 1-carboxyvinyltransferase (418 aa).

22-23 contributes to the phosphoenolpyruvate binding site; that stretch reads KN. A UDP-N-acetyl-alpha-D-glucosamine-binding site is contributed by Arg91. The active-site Proton donor is the Cys115. Cys115 bears the 2-(S-cysteinyl)pyruvic acid O-phosphothioketal mark. UDP-N-acetyl-alpha-D-glucosamine contacts are provided by Asp303 and Ile325.

It belongs to the EPSP synthase family. MurA subfamily.

Its subcellular location is the cytoplasm. The enzyme catalyses phosphoenolpyruvate + UDP-N-acetyl-alpha-D-glucosamine = UDP-N-acetyl-3-O-(1-carboxyvinyl)-alpha-D-glucosamine + phosphate. It participates in cell wall biogenesis; peptidoglycan biosynthesis. Functionally, cell wall formation. Adds enolpyruvyl to UDP-N-acetylglucosamine. The sequence is that of UDP-N-acetylglucosamine 1-carboxyvinyltransferase from Syntrophobacter fumaroxidans (strain DSM 10017 / MPOB).